The sequence spans 222 residues: MTQDELKKAAALAALDYVEDGMIVGVGTGSTVNHFIDGLAGIKHRIRGAVSSSEASSKRLAAHGIALLDLNDVDELPVYIDGADEIDHGFAMIKGGGGALTREKIVAAVARRFVCICDESKRVDVLGRFPLPIEVIPMARSQVMRAAAALGATPRLREGFVTDNGNLIIDLHGLSITDPCATEQALNAVVGVVTNGLFAARGADTLLLASAQGVRRFERSAT.

Substrate-binding positions include 28–31 (TGST), 81–84 (DGAD), and 94–97 (KGGG). The Proton acceptor role is filled by E103. K121 lines the substrate pocket.

The protein belongs to the ribose 5-phosphate isomerase family. In terms of assembly, homodimer.

It carries out the reaction aldehydo-D-ribose 5-phosphate = D-ribulose 5-phosphate. It functions in the pathway carbohydrate degradation; pentose phosphate pathway; D-ribose 5-phosphate from D-ribulose 5-phosphate (non-oxidative stage): step 1/1. Functionally, catalyzes the reversible conversion of ribose-5-phosphate to ribulose 5-phosphate. This Azoarcus sp. (strain BH72) protein is Ribose-5-phosphate isomerase A.